We begin with the raw amino-acid sequence, 95 residues long: Protein GOLVEN 9 (95 aa).

The first 24 residues, methionine 1 to glycine 24, serve as a signal peptide directing secretion. A propeptide spanning residues proline 25 to histidine 73 is cleaved from the precursor. Positions glutamate 72–histidine 95 are disordered. Residue tyrosine 75 is modified to Sulfotyrosine. Residues lysine 80–histidine 95 are compositionally biased toward basic residues. Hydroxyproline is present on proline 86. Positions glycine 90–histidine 95 are excised as a propeptide.

It belongs to the RGF family. Binds to LRR receptor-like serine/threonine-protein kinases to trigger their dimerization with SERK proteins and subsequent signaling. Expressed in roots.

It localises to the secreted. Signaling peptide (root growth factor) required during root gravitropism in a PIN2-traffic dependent manner. Regulates the pattern of root growth and lateral root development by modulating the length and the number of cortical cells in the root apical meristem (RAM), and the anticlinal asymmetric cell divisions in lateral root initiation cells. This chain is Protein GOLVEN 9, found in Arabidopsis thaliana (Mouse-ear cress).